The primary structure comprises 192 residues: Ion-translocating oxidoreductase complex subunit B (192 aa).

The hydrophobic stretch occupies residues 1–26; it reads MNTIWIAVGALALLGLVFGAILGYAS. Positions 32-91 constitute a 4Fe-4S domain; sequence EDDPVVEKIDAILPQSQCGQCGYPGCRPYAEAVGLQGEKINRCAPGGEAVMLKIAELLNV. [4Fe-4S] cluster contacts are provided by Cys49, Cys52, Cys57, Cys74, Cys117, Cys120, Cys123, Cys127, Cys147, Cys150, Cys153, and Cys157. 4Fe-4S ferredoxin-type domains lie at 108 to 137 and 138 to 167; these read MLAV…GATR and AMHT…LRPV.

Belongs to the 4Fe4S bacterial-type ferredoxin family. RnfB subfamily. The complex is composed of six subunits: RsxA, RsxB, RsxC, RsxD, RsxE and RsxG. [4Fe-4S] cluster is required as a cofactor.

The protein resides in the cell inner membrane. Its function is as follows. Part of a membrane-bound complex that couples electron transfer with translocation of ions across the membrane. Required to maintain the reduced state of SoxR. This chain is Ion-translocating oxidoreductase complex subunit B, found in Salmonella newport (strain SL254).